The chain runs to 1382 residues: Hepatocyte growth factor receptor (1382 aa).

A signal peptide spans 1–24 (MKAPAVLAPGILVLLFTLVQKSYG). Over 25–933 (ECREALVKSE…VIVQPDQNFT (909 aa)) the chain is Extracellular. The Sema domain occupies 27-516 (REALVKSEMN…TGKKITKIPL (490 aa)). Residue N45 is glycosylated (N-linked (GlcNAc...) asparagine). 4 disulfides stabilise this stretch: C95–C101, C98–C160, C133–C141, and C173–C176. N-linked (GlcNAc...) asparagine glycosylation occurs at N106. Residues N203 and N359 are each glycosylated (N-linked (GlcNAc...) asparagine). 2 cysteine pairs are disulfide-bonded: C299/C364 and C386/C398. N400 and N406 each carry an N-linked (GlcNAc...) asparagine glycan. 4 disulfide bridges follow: C521-C539, C527-C562, C530-C546, and C542-C552. IPT/TIG domains lie at 564-656 (PTIY…FSYV), 658-740 (PVIT…FSYQ), and 743-837 (PIVY…LIYV). A glycan (O-linked (Man) threonine) is linked at T583. N-linked (GlcNAc...) asparagine glycans are attached at residues N608 and N636. Residues T677 and T762 are each glycosylated (O-linked (Man) threonine). N-linked (GlcNAc...) asparagine glycans are attached at residues N786, N880, and N931. A helical membrane pass occupies residues 934–956 (GLIVGVISISIILLLLLGVFLWL). At 957-1382 (KKRKQIKDLG…QDNIDGEGDT (426 aa)) the chain is on the cytoplasmic side. S967 is modified (phosphoserine). T978 carries the post-translational modification Phosphothreonine. 3 positions are modified to phosphoserine: S991, S998, and S1001. Y1004 carries the post-translational modification Phosphotyrosine. A Protein kinase domain is found at 1079 to 1346 (VHFNEVIGRG…RISAIFSTFI (268 aa)). Residues 1085-1093 (IGRGHFGCV) and K1111 each bind ATP. D1205 serves as the catalytic Proton acceptor. Residues 1213–1382 (LDEKFTVKVA…QDNIDGEGDT (170 aa)) form an interaction with RANBP9 region. At Y1231 the chain carries Phosphotyrosine. Phosphotyrosine; by autocatalysis occurs at positions 1235 and 1236. T1290 is subject to Phosphothreonine. The tract at residues 1321-1360 (WHPKAELRPSFSELVSRISAIFSTFIGEHYVHVNATYVNV) is interaction with MUC20. Phosphotyrosine; by autocatalysis is present on residues Y1350 and Y1357. Y1366 carries the post-translational modification Phosphotyrosine.

The protein belongs to the protein kinase superfamily. Tyr protein kinase family. Heterodimer made of an alpha chain (50 kDa) and a beta chain (145 kDa) which are disulfide linked. Binds PLXNB1. Interacts when phosphorylated with downstream effectors including STAT3, PIK3R1, SRC, PCLG1, GRB2 and GAB1. Interacts with SPSB1, SPSB2 and SPSB4. Interacts with INPP5D/SHIP1. When phosphorylated at Tyr-1357, interacts with INPPL1/SHIP2. Interacts with RANBP9 and RANBP10, as well as SPSB1, SPSB2, SPSB3 and SPSB4. SPSB1 binding occurs in the presence and in the absence of HGF, however HGF treatment has a positive effect on this interaction. Interacts with MUC20; prevents interaction with GRB2 and suppresses hepatocyte growth factor-induced cell proliferation. Interacts with GRB10. Interacts with PTPN1 and PTPN2. Interacts with HSP90AA1 and HSP90AB1; the interaction suppresses MET kinase activity. Interacts with tensin TNS3. Interacts (when phosphorylated) with tensin TNS4 (via SH2 domain); the interaction increases MET protein stability by inhibiting MET endocytosis and subsequent lysosomal degradation. Autophosphorylated in response to ligand binding on Tyr-1235 and Tyr-1236 in the kinase domain leading to further phosphorylation of Tyr-1350 and Tyr-1357 in the C-terminal multifunctional docking site. Dephosphorylated by PTPRJ at Tyr-1350 and Tyr-1366. Dephosphorylated by PTPN1 and PTPN2. In terms of processing, ubiquitinated. Ubiquitination by CBL regulates the receptor stability and activity through proteasomal degradation. Post-translationally, O-mannosylation of IPT/TIG domains by TMEM260 is required for protein maturation. O-mannosylated residues are composed of single mannose glycans that are not elongated or modified.

It localises to the membrane. The catalysed reaction is L-tyrosyl-[protein] + ATP = O-phospho-L-tyrosyl-[protein] + ADP + H(+). Its activity is regulated as follows. In its inactive state, the C-terminal tail interacts with the catalytic domain and inhibits the kinase activity. Upon ligand binding, the C-terminal tail is displaced and becomes phosphorylated, thus increasing the kinase activity. Receptor tyrosine kinase that transduces signals from the extracellular matrix into the cytoplasm by binding to hepatocyte growth factor/HGF ligand. Regulates many physiological processes including proliferation, scattering, morphogenesis and survival. Ligand binding at the cell surface induces autophosphorylation of MET on its intracellular domain that provides docking sites for downstream signaling molecules. Following activation by ligand, interacts with the PI3-kinase subunit PIK3R1, PLCG1, SRC, GRB2, STAT3 or the adapter GAB1. Recruitment of these downstream effectors by MET leads to the activation of several signaling cascades including the RAS-ERK, PI3 kinase-AKT, or PLCgamma-PKC. The RAS-ERK activation is associated with the morphogenetic effects while PI3K/AKT coordinates prosurvival effects. During embryonic development, MET signaling plays a role in gastrulation, development and migration of muscles and neuronal precursors, angiogenesis and kidney formation. In adults, participates in wound healing as well as organ regeneration and tissue remodeling. Also promotes differentiation and proliferation of hematopoietic cells. The protein is Hepatocyte growth factor receptor (MET) of Felis catus (Cat).